We begin with the raw amino-acid sequence, 428 residues long: Light-independent protochlorophyllide reductase subunit N (428 aa).

[4Fe-4S] cluster contacts are provided by Cys29, Cys54, and Cys115.

This sequence belongs to the BchN/ChlN family. As to quaternary structure, protochlorophyllide reductase is composed of three subunits; BchL, BchN and BchB. Forms a heterotetramer of two BchB and two BchN subunits. [4Fe-4S] cluster serves as cofactor.

It carries out the reaction chlorophyllide a + oxidized 2[4Fe-4S]-[ferredoxin] + 2 ADP + 2 phosphate = protochlorophyllide a + reduced 2[4Fe-4S]-[ferredoxin] + 2 ATP + 2 H2O. It participates in porphyrin-containing compound metabolism; bacteriochlorophyll biosynthesis (light-independent). In terms of biological role, component of the dark-operative protochlorophyllide reductase (DPOR) that uses Mg-ATP and reduced ferredoxin to reduce ring D of protochlorophyllide (Pchlide) to form chlorophyllide a (Chlide). This reaction is light-independent. The NB-protein (BchN-BchB) is the catalytic component of the complex. This Cereibacter sphaeroides (strain ATCC 17025 / ATH 2.4.3) (Rhodobacter sphaeroides) protein is Light-independent protochlorophyllide reductase subunit N.